Here is a 160-residue protein sequence, read N- to C-terminus: Afimbrial adhesin AFA-III (160 aa).

An N-terminal signal peptide occupies residues 1–21 (MKKLAIMAAASMVFAVSSAHA). The segment at 22–75 (GFTPSGTTGTTKLTVTEECQVRVGDLTVAKTRGQLTDAAPIGPVTVQALGCNAR) is receptor-binding.

It belongs to the Dr-adhesin family.

It is found in the fimbrium. Hemagglutinins of uropathogenic E.coli mediate adherence to the upper urinary tract. These adhesins bind to the Dr blood group antigen and also agglutinate human erythrocytes in the presence of D-mannose (mannose-resistant hemagglutination (MRHA)). This chain is Afimbrial adhesin AFA-III (afaE3), found in Escherichia coli.